We begin with the raw amino-acid sequence, 332 residues long: Nuclear hormone receptor family member nhr-9 (332 aa).

The segment at residues 11-85 is a DNA-binding region (nuclear receptor); the sequence is ERRCAICSKL…MGMRIVTNQY (75 aa). 2 consecutive NR C4-type zinc fingers follow at residues 14 to 34 and 50 to 73; these read CAIC…CNAC and CINN…YNKC. Residues 101–332 enclose the NR LBD domain; that stretch reads DRSNKLMNFQ…KRLCAELLGA (232 aa).

This sequence belongs to the nuclear hormone receptor family.

It is found in the nucleus. In terms of biological role, orphan nuclear receptor. This Caenorhabditis elegans protein is Nuclear hormone receptor family member nhr-9 (nhr-9).